The sequence spans 1191 residues: MASRQGFSNVNEDEPELPPSVLSLKSKFESLSTGDLTNLDEKTAKRRTVKGCKNGTSEPNVFKARPIPPPRQVSSTIGSSTGRKVSGSIQRLASNFKNPSNPHADVSKIDRLPSDSSESHVATPSSPTISNSFVSVSPLLKRPQQKGPEISFQSSVQSTKGNDLMKHDDTNNHQIPPPKPNFSSKAGSSSPISVSPLKNVKAYISQSPTHSEASSVLSSEEEEENVINSSKSVPSFDLHDPFSQTFGKECPISTAPPVLNIGDRSLETPPPIPSPRPPQPVAVEAIQQSRAVISQQLPLHVSPRKPPKPPLRKVSTQRSSSPIENLATKSDASLVTGLQSSPYTHIAPASEMSLIPEKPRLPPRPSHTLSELSSPALTSENLSSKPSPLFPPPPPRVKSLATNKPVSMPVSTEQSDPSVAASSSSSSQLDVVLKGSIPDTSSVRRNPPCFVNGVESINVDFEARIFDVSGDRLVLAGNGGLRVYDTVTGLCHWHMPLGDTKVTSLSFKSSPENYSDDGRFVWFGTRDGMLWEVDVQNHHIVTKKSVSNCPITYVMVYKNEMWTLDDMGKLYVWQEDEIMGLSIQSTPHSIRTIPHATHAMVLDNRLLWVVVGKSIYVYDPSTSENESASVLAKPMTPPGLIGDISCGTTISNFTDLVFYGHVDGKISIFSKTQYRFLELITSSSFYRICSLVGVGNTLWAAYTTGMIYVFDVSESPWRLLKSWHGHKASHNGATTILGIDVNSVWKAKRLQVVSMASSVVKFWDGLMMGDWLATEMRSRFPEYSNFTDVSILICSWNAGASKPSDLDSDTIGASMIPMMIRDNGYPDIVVFGFQELVDLENKRLTARSILSKSSSKGGSSNSANISSQYRLWREKLESEMMRVSSNDDYQVLVCENLVGLFSCVFVKNKLQSKIRMLQSTTVKTGLGGLHGNKGAIVVRFLVDDTSYCIVNCHLAAGQSNKAARNNDLATILDNASLFPENDETDQLNTFVGGGDGSLIMDHEVCVLHGDLNYRINTLRPKALDLIKKNDIKTLLQSDQLLVERKRNAGFRLRTFTEPEITFAPTYKYDVHSEQYDSSEKKRVPAWCDRICYRGSPDYISAENYTRYELKASDHRPVSALIHSKAKMVNAQSQGSTWDVVKRKWIEYADEFKRKAKITYVMNYTSVSYQTAEQYLSGNNWNVQNALKQVSS.

5 stretches are compositionally biased toward polar residues: residues 1 to 10 (MASRQGFSNV), 72 to 101 (QVSS…NPSN), 114 to 135 (SDSS…SFVS), 151 to 161 (SFQSSVQSTKG), and 181 to 193 (NFSS…SPIS). The segment at 1-193 (MASRQGFSNV…SKAGSSSPIS (193 aa)) is disordered. Ser-195 is subject to Phosphoserine. 3 disordered regions span residues 205–281 (SQSP…PQPV), 294–334 (SQQL…DASL), and 355–425 (IPEK…SSSS). Pro residues predominate over residues 268-280 (TPPPIPSPRPPQP). Residues 302–311 (SPRKPPKPPL) show a composition bias toward basic residues. Composition is skewed to polar residues over residues 316–334 (TQRS…DASL), 367–382 (HTLS…SENL), and 400–413 (LATN…VSTE). A compositionally biased stretch (low complexity) spans 414–425 (QSDPSVAASSSS).

This sequence belongs to the inositol 1,4,5-trisphosphate 5-phosphatase family.

It is found in the cytoplasm. The polypeptide is Probable inositol polyphosphate 5-phosphatase C9G1.10c (Schizosaccharomyces pombe (strain 972 / ATCC 24843) (Fission yeast)).